Here is a 148-residue protein sequence, read N- to C-terminus: Deoxyuridine 5'-triphosphate nucleotidohydrolase (148 aa).

This sequence belongs to the dUTPase family. Mg(2+) is required as a cofactor.

The enzyme catalyses dUTP + H2O = dUMP + diphosphate + H(+). It functions in the pathway pyrimidine metabolism; dUMP biosynthesis; dUMP from dCTP (dUTP route): step 2/2. In terms of biological role, this enzyme decreases the intracellular concentration of dUTP so that uracil cannot be incorporated into viral progeny DNA. This activity is sufficient to exclude uracil from the DNA during phage replication. In the case of dUTPase mutant phages, the host dUTPase activity is not sufficient to exclude uracil from T5 DNA and uracil are incorporated, leading to decreased phage viability. The chain is Deoxyuridine 5'-triphosphate nucleotidohydrolase (DUT) from Escherichia coli (Enterobacteria phage T5).